Consider the following 295-residue polypeptide: Phosphoribosylaminoimidazole-succinocarboxamide synthase (295 aa).

This sequence belongs to the SAICAR synthetase family.

It catalyses the reaction 5-amino-1-(5-phospho-D-ribosyl)imidazole-4-carboxylate + L-aspartate + ATP = (2S)-2-[5-amino-1-(5-phospho-beta-D-ribosyl)imidazole-4-carboxamido]succinate + ADP + phosphate + 2 H(+). It participates in purine metabolism; IMP biosynthesis via de novo pathway; 5-amino-1-(5-phospho-D-ribosyl)imidazole-4-carboxamide from 5-amino-1-(5-phospho-D-ribosyl)imidazole-4-carboxylate: step 1/2. This chain is Phosphoribosylaminoimidazole-succinocarboxamide synthase, found in Halorhodospira halophila (strain DSM 244 / SL1) (Ectothiorhodospira halophila (strain DSM 244 / SL1)).